Consider the following 184-residue polypeptide: Chaperone protein dnaJ 72 (184 aa).

Positions 3 to 73 (DHYQVLGVTR…LKRASYNAGS (71 aa)) constitute a J domain. A helical transmembrane segment spans residues 133–150 (FLLNLALAGGLYFAFTAI).

The protein belongs to the DnaJ family. C/III subfamily.

It localises to the membrane. Functionally, plays a continuous role in plant development probably in the structural organization of compartments. In Arabidopsis thaliana (Mouse-ear cress), this protein is Chaperone protein dnaJ 72 (ATJ72).